Here is a 64-residue protein sequence, read N- to C-terminus: Cytochrome c oxidase subunit 5C-2 (64 aa).

The helical transmembrane segment at 15 to 34 threads the bilayer; it reads SVVKELVIGTVLGLAAGGLW.

Belongs to the cytochrome c oxidase subunit 5C family.

It is found in the mitochondrion inner membrane. This protein is one of the nuclear-coded polypeptide chains of cytochrome c oxidase, the terminal oxidase in mitochondrial electron transport. The protein is Cytochrome c oxidase subunit 5C-2 (COX5C2) of Helianthus annuus (Common sunflower).